A 431-amino-acid chain; its full sequence is C4-dicarboxylate transport protein (431 aa).

8 consecutive transmembrane segments (helical) span residues 8 to 28 (ILYV…HFWP), 44 to 64 (LIKM…IAGM), 78 to 98 (LLYF…AAHL), 148 to 168 (GDIL…AAIG), 188 to 208 (IVHV…AFTI), 222 to 242 (LIGT…GAIA), 307 to 327 (IYMT…LTLL), and 355 to 375 (AATL…ILGI).

It belongs to the dicarboxylate/amino acid:cation symporter (DAACS) (TC 2.A.23) family.

It is found in the cell inner membrane. Responsible for the transport of dicarboxylates such as succinate, fumarate, and malate from the periplasm across the membrane. The sequence is that of C4-dicarboxylate transport protein from Cupriavidus pinatubonensis (strain JMP 134 / LMG 1197) (Cupriavidus necator (strain JMP 134)).